The sequence spans 645 residues: Threonine--tRNA ligase (645 aa).

The TGS domain occupies 1–63; the sequence is MEQINIQFPD…ETDGSIEIVT (63 aa). The segment at 242–540 is catalytic; the sequence is DHRKIGKELE…LTEETKGAFP (299 aa). Residues Cys-336, His-387, and His-517 each contribute to the Zn(2+) site.

This sequence belongs to the class-II aminoacyl-tRNA synthetase family. As to quaternary structure, homodimer. The cofactor is Zn(2+).

It is found in the cytoplasm. It carries out the reaction tRNA(Thr) + L-threonine + ATP = L-threonyl-tRNA(Thr) + AMP + diphosphate + H(+). Functionally, catalyzes the attachment of threonine to tRNA(Thr) in a two-step reaction: L-threonine is first activated by ATP to form Thr-AMP and then transferred to the acceptor end of tRNA(Thr). Also edits incorrectly charged L-seryl-tRNA(Thr). This chain is Threonine--tRNA ligase, found in Staphylococcus aureus (strain JH1).